We begin with the raw amino-acid sequence, 488 residues long: Germacrene A hydroxylase (488 aa).

At 1-6 the chain is on the cytoplasmic side; sequence MELSIT. Residues 7–23 form a helical; Signal-anchor for type II membrane protein membrane-spanning segment; that stretch reads TSIALATIVFFLYKLAT. Over 24 to 488 the chain is Lumenal; sequence RPKSTKKQLP…KTELLLVPSF (465 aa). N-linked (GlcNAc...) asparagine glycans are attached at residues Asn169, Asn260, and Asn379. Position 432 (Cys432) interacts with heme.

The protein belongs to the cytochrome P450 family. It depends on heme as a cofactor.

It localises to the endoplasmic reticulum membrane. It carries out the reaction (+)-(R)-germacrene A + 3 reduced [NADPH--hemoprotein reductase] + 3 O2 = germacra-1(10),4,11(13)-trien-12-oate + 3 oxidized [NADPH--hemoprotein reductase] + 4 H2O + 4 H(+). It participates in secondary metabolite biosynthesis; terpenoid biosynthesis. Involved in the biosynthesis of germacrene-derived sesquiterpene lactones. Catalyzes three consecutive oxidations of germacrene A to produce germacrene A acid. Could also catalyze the three-step oxidation of non-natural substrate amorphadiene to artemisinic acid. This is Germacrene A hydroxylase from Lactuca sativa (Garden lettuce).